The sequence spans 307 residues: Protein TIPIN homolog (307 aa).

Disordered stretches follow at residues 1–50 (MASL…SQDA) and 252–279 (ASMD…LSNE). Positions 262 to 271 (PLPPSQPPTP) are enriched in pro residues.

This sequence belongs to the CSM3 family.

The protein localises to the cytoplasm. It is found in the nucleus. Its function is as follows. Required for normal progression of S-phase. Important for cell survival after DNA damage or replication stress. In Drosophila melanogaster (Fruit fly), this protein is Protein TIPIN homolog.